A 238-amino-acid polypeptide reads, in one-letter code: NADH-quinone oxidoreductase subunit C (238 aa).

The segment covering 1 to 11 has biased composition (polar residues); sequence MSTSNGSANGT. A disordered region spans residues 1–20; that stretch reads MSTSNGSANGTNGVGLPRGD.

The protein belongs to the complex I 30 kDa subunit family. As to quaternary structure, NDH-1 is composed of 14 different subunits. Subunits NuoB, C, D, E, F, and G constitute the peripheral sector of the complex.

It localises to the cell membrane. The enzyme catalyses a quinone + NADH + 5 H(+)(in) = a quinol + NAD(+) + 4 H(+)(out). In terms of biological role, NDH-1 shuttles electrons from NADH, via FMN and iron-sulfur (Fe-S) centers, to quinones in the respiratory chain. The immediate electron acceptor for the enzyme in this species is believed to be a menaquinone. Couples the redox reaction to proton translocation (for every two electrons transferred, four hydrogen ions are translocated across the cytoplasmic membrane), and thus conserves the redox energy in a proton gradient. The sequence is that of NADH-quinone oxidoreductase subunit C from Mycolicibacterium smegmatis (strain ATCC 700084 / mc(2)155) (Mycobacterium smegmatis).